We begin with the raw amino-acid sequence, 179 residues long: UPF0398 protein SSU05_0416 (179 aa).

It belongs to the UPF0398 family.

In Streptococcus suis (strain 05ZYH33), this protein is UPF0398 protein SSU05_0416.